We begin with the raw amino-acid sequence, 324 residues long: Non-homologous end joining protein Ku 1 (324 aa).

The 184-residue stretch at 10–193 (INFGLVTIPV…AKPSDKEIQM (184 aa)) folds into the Ku domain. The interval 256-324 (QARRGRGGQV…SGGRRRRRAS (69 aa)) is disordered. A compositionally biased stretch (basic and acidic residues) spans 281 to 292 (AELDKKAKELGI).

Belongs to the prokaryotic Ku family. As to quaternary structure, homodimer. Interacts with LigD.

Functionally, with LigD forms a non-homologous end joining (NHEJ) DNA repair enzyme, which repairs dsDNA breaks with reduced fidelity. Binds linear dsDNA with 5'- and 3'- overhangs but not closed circular dsDNA nor ssDNA. Recruits and stimulates the ligase activity of LigD. This Saccharopolyspora erythraea (strain ATCC 11635 / DSM 40517 / JCM 4748 / NBRC 13426 / NCIMB 8594 / NRRL 2338) protein is Non-homologous end joining protein Ku 1.